Reading from the N-terminus, the 417-residue chain is Gamma-glutamyl phosphate reductase (417 aa).

It belongs to the gamma-glutamyl phosphate reductase family.

The protein localises to the cytoplasm. It carries out the reaction L-glutamate 5-semialdehyde + phosphate + NADP(+) = L-glutamyl 5-phosphate + NADPH + H(+). Its pathway is amino-acid biosynthesis; L-proline biosynthesis; L-glutamate 5-semialdehyde from L-glutamate: step 2/2. Its function is as follows. Catalyzes the NADPH-dependent reduction of L-glutamate 5-phosphate into L-glutamate 5-semialdehyde and phosphate. The product spontaneously undergoes cyclization to form 1-pyrroline-5-carboxylate. In Haemophilus influenzae (strain ATCC 51907 / DSM 11121 / KW20 / Rd), this protein is Gamma-glutamyl phosphate reductase.